A 205-amino-acid chain; its full sequence is Outer-membrane lipoprotein LolB (205 aa).

Positions 1–17 (MFLRHCITFTLIALLAG) are cleaved as a signal peptide. Cys-18 is lipidated: N-palmitoyl cysteine. Cys-18 is lipidated: S-diacylglycerol cysteine.

It belongs to the LolB family. As to quaternary structure, monomer.

Its subcellular location is the cell outer membrane. In terms of biological role, plays a critical role in the incorporation of lipoproteins in the outer membrane after they are released by the LolA protein. The polypeptide is Outer-membrane lipoprotein LolB (Pseudomonas putida (strain W619)).